A 368-amino-acid polypeptide reads, in one-letter code: GDSL esterase/lipase At4g16230 (368 aa).

An N-terminal signal peptide occupies residues 1–24 (MSLLVFLCQIIVLSVLFFSEVCLA). Ser37 functions as the Nucleophile in the catalytic mechanism. N-linked (GlcNAc...) asparagine glycosylation is found at Asn117 and Asn286. Residues Asp329 and His332 contribute to the active site.

The protein belongs to the 'GDSL' lipolytic enzyme family.

The protein localises to the secreted. This chain is GDSL esterase/lipase At4g16230, found in Arabidopsis thaliana (Mouse-ear cress).